Here is a 114-residue protein sequence, read N- to C-terminus: Large ribosomal subunit protein uL22 (114 aa).

It belongs to the universal ribosomal protein uL22 family. Part of the 50S ribosomal subunit.

Functionally, this protein binds specifically to 23S rRNA; its binding is stimulated by other ribosomal proteins, e.g. L4, L17, and L20. It is important during the early stages of 50S assembly. It makes multiple contacts with different domains of the 23S rRNA in the assembled 50S subunit and ribosome. The globular domain of the protein is located near the polypeptide exit tunnel on the outside of the subunit, while an extended beta-hairpin is found that lines the wall of the exit tunnel in the center of the 70S ribosome. The chain is Large ribosomal subunit protein uL22 from Streptococcus gordonii (strain Challis / ATCC 35105 / BCRC 15272 / CH1 / DL1 / V288).